Reading from the N-terminus, the 161-residue chain is Eukaryotic translation initiation factor 5A-1 (161 aa).

K54 is subject to Hypusine.

The protein belongs to the eIF-5A family. Lys-54 undergoes hypusination, a unique post-translational modification that consists in the addition of a butylamino group from spermidine to lysine side chain, leading to the formation of the unusual amino acid hypusine. eIF-5As are the only known proteins to undergo this modification, which is essential for their function. In terms of tissue distribution, expressed specifically in the germline in the distal region of gonads where germ cells actively proliferate.

The protein resides in the cytoplasm. Translation factor that promotes translation elongation and termination, particularly upon ribosome stalling at specific amino acid sequence contexts. Binds between the exit (E) and peptidyl (P) site of the ribosome and promotes rescue of stalled ribosome: specifically required for efficient translation of polyproline-containing peptides as well as other motifs that stall the ribosome. Acts as a ribosome quality control (RQC) cofactor by joining the RQC complex to facilitate peptidyl transfer during CAT tailing step. Required for mitotic germ cell proliferation, gametogenesis after entry into meiosis, and localization of the P granule component pgl-1 on P granules. The sequence is that of Eukaryotic translation initiation factor 5A-1 (iff-1) from Caenorhabditis elegans.